The following is a 449-amino-acid chain: tRNA (guanine(37)-N(1))-methyltransferase (449 aa).

Residues His216, 254 to 255 (DL), 282 to 283 (DG), and Asn345 each bind S-adenosyl-L-methionine.

The protein belongs to the class I-like SAM-binding methyltransferase superfamily. TRM5/TYW2 family. In terms of assembly, monomer.

Its subcellular location is the mitochondrion matrix. It is found in the nucleus. The protein resides in the cytoplasm. It catalyses the reaction guanosine(37) in tRNA + S-adenosyl-L-methionine = N(1)-methylguanosine(37) in tRNA + S-adenosyl-L-homocysteine + H(+). In terms of biological role, specifically methylates the N1 position of guanosine-37 in various cytoplasmic and mitochondrial tRNAs. Methylation is not dependent on the nature of the nucleoside 5' of the target nucleoside. This is the first step in the biosynthesis of wybutosine (yW), a modified base adjacent to the anticodon of tRNAs and required for accurate decoding. The protein is tRNA (guanine(37)-N(1))-methyltransferase of Candida albicans (strain WO-1) (Yeast).